A 94-amino-acid chain; its full sequence is Large ribosomal subunit protein bL25 (94 aa).

The protein belongs to the bacterial ribosomal protein bL25 family. As to quaternary structure, part of the 50S ribosomal subunit; part of the 5S rRNA/L5/L18/L25 subcomplex. Contacts the 5S rRNA. Binds to the 5S rRNA independently of L5 and L18.

This is one of the proteins that binds to the 5S RNA in the ribosome where it forms part of the central protuberance. The polypeptide is Large ribosomal subunit protein bL25 (Sodalis glossinidius (strain morsitans)).